We begin with the raw amino-acid sequence, 123 residues long: Large ribosomal subunit protein bL12 (123 aa).

This sequence belongs to the bacterial ribosomal protein bL12 family. As to quaternary structure, homodimer. Part of the ribosomal stalk of the 50S ribosomal subunit. Forms a multimeric L10(L12)X complex, where L10 forms an elongated spine to which 2 to 4 L12 dimers bind in a sequential fashion. Binds GTP-bound translation factors.

Functionally, forms part of the ribosomal stalk which helps the ribosome interact with GTP-bound translation factors. Is thus essential for accurate translation. This Acinetobacter baumannii (strain AB307-0294) protein is Large ribosomal subunit protein bL12.